A 219-amino-acid chain; its full sequence is Cytidylate kinase (219 aa).

15 to 23 (GPAASGKGT) lines the ATP pocket.

Belongs to the cytidylate kinase family. Type 1 subfamily.

The protein localises to the cytoplasm. It carries out the reaction CMP + ATP = CDP + ADP. The enzyme catalyses dCMP + ATP = dCDP + ADP. This chain is Cytidylate kinase, found in Brucella abortus (strain S19).